The chain runs to 682 residues: Glutamine--fructose-6-phosphate aminotransferase [isomerizing] 2 (682 aa).

The active-site For GATase activity is the Cys2. A Glutamine amidotransferase type-2 domain is found at 2 to 288 (CGIFAYMNYR…DDDIAAVADG (287 aa)). Residue Ser244 is modified to Phosphoserine. SIS domains are found at residues 360–499 (HLKE…DRIS) and 531–672 (LALE…VDFP). Substrate-binding positions include 377 to 378 (TS), 422 to 424 (SQS), Thr427, and His578.

It catalyses the reaction D-fructose 6-phosphate + L-glutamine = D-glucosamine 6-phosphate + L-glutamate. Its pathway is nucleotide-sugar biosynthesis; UDP-N-acetyl-alpha-D-glucosamine biosynthesis; alpha-D-glucosamine 6-phosphate from D-fructose 6-phosphate: step 1/1. Controls the flux of glucose into the hexosamine pathway. Most likely involved in regulating the availability of precursors for N- and O-linked glycosylation of proteins. The sequence is that of Glutamine--fructose-6-phosphate aminotransferase [isomerizing] 2 (Gfpt2) from Mus musculus (Mouse).